Consider the following 376-residue polypeptide: 23S rRNA (uracil(747)-C(5))-methyltransferase RlmC (376 aa).

Residues Cys-3, Cys-11, Cys-14, and Cys-87 each coordinate [4Fe-4S] cluster. The S-adenosyl-L-methionine site is built by Gln-212, Phe-241, Glu-262, and Asn-307. Cys-334 acts as the Nucleophile in catalysis.

It belongs to the class I-like SAM-binding methyltransferase superfamily. RNA M5U methyltransferase family. RlmC subfamily.

It catalyses the reaction uridine(747) in 23S rRNA + S-adenosyl-L-methionine = 5-methyluridine(747) in 23S rRNA + S-adenosyl-L-homocysteine + H(+). In terms of biological role, catalyzes the formation of 5-methyl-uridine at position 747 (m5U747) in 23S rRNA. This is 23S rRNA (uracil(747)-C(5))-methyltransferase RlmC from Yersinia pseudotuberculosis serotype I (strain IP32953).